The chain runs to 278 residues: DegV domain-containing protein YejH (278 aa).

The 275-residue stretch at isoleucine 3–tyrosine 277 folds into the DegV domain. Hexadecanoate contacts are provided by threonine 60 and serine 92.

In terms of biological role, may bind long-chain fatty acids, such as palmitate, and may play a role in lipid transport or fatty acid metabolism. This Lactococcus lactis subsp. lactis (strain IL1403) (Streptococcus lactis) protein is DegV domain-containing protein YejH (yejH).